A 444-amino-acid chain; its full sequence is Enolase 1 (444 aa).

2 residues coordinate substrate: histidine 165 and glutamate 174. The Proton donor role is filled by glutamate 217. Substrate is bound by residues glutamate 303 and aspartate 330. Lysine 355 functions as the Proton acceptor in the catalytic mechanism. Substrate contacts are provided by residues 382-385 (SHRS) and lysine 406.

Belongs to the enolase family. Homodimer. It depends on Mg(2+) as a cofactor.

It is found in the cytoplasm. The catalysed reaction is (2R)-2-phosphoglycerate = phosphoenolpyruvate + H2O. It participates in carbohydrate degradation; glycolysis; pyruvate from D-glyceraldehyde 3-phosphate: step 4/5. The polypeptide is Enolase 1 (ENO1) (Toxoplasma gondii).